The sequence spans 543 residues: Chaperonin GroEL 2 (543 aa).

Residues 29 to 32 (TLGP), 86 to 90 (DGTTT), G413, and D495 contribute to the ATP site. The disordered stretch occupies residues 524-543 (KPEPKENAPTGAGMGGDFDY).

The protein belongs to the chaperonin (HSP60) family. As to quaternary structure, forms a cylinder of 14 subunits composed of two heptameric rings stacked back-to-back. Interacts with the co-chaperonin GroES.

Its subcellular location is the cytoplasm. The enzyme catalyses ATP + H2O + a folded polypeptide = ADP + phosphate + an unfolded polypeptide.. Its function is as follows. Together with its co-chaperonin GroES, plays an essential role in assisting protein folding. The GroEL-GroES system forms a nano-cage that allows encapsulation of the non-native substrate proteins and provides a physical environment optimized to promote and accelerate protein folding. The sequence is that of Chaperonin GroEL 2 from Acaryochloris marina (strain MBIC 11017).